A 367-amino-acid chain; its full sequence is UDP-N-acetylglucosamine--N-acetylmuramyl-(pentapeptide) pyrophosphoryl-undecaprenol N-acetylglucosamine transferase (367 aa).

Residues 15 to 17 (TGG), asparagine 127, arginine 163, serine 191, isoleucine 249, and glutamine 294 each bind UDP-N-acetyl-alpha-D-glucosamine.

This sequence belongs to the glycosyltransferase 28 family. MurG subfamily.

Its subcellular location is the cell inner membrane. The catalysed reaction is di-trans,octa-cis-undecaprenyl diphospho-N-acetyl-alpha-D-muramoyl-L-alanyl-D-glutamyl-meso-2,6-diaminopimeloyl-D-alanyl-D-alanine + UDP-N-acetyl-alpha-D-glucosamine = di-trans,octa-cis-undecaprenyl diphospho-[N-acetyl-alpha-D-glucosaminyl-(1-&gt;4)]-N-acetyl-alpha-D-muramoyl-L-alanyl-D-glutamyl-meso-2,6-diaminopimeloyl-D-alanyl-D-alanine + UDP + H(+). It participates in cell wall biogenesis; peptidoglycan biosynthesis. Its function is as follows. Cell wall formation. Catalyzes the transfer of a GlcNAc subunit on undecaprenyl-pyrophosphoryl-MurNAc-pentapeptide (lipid intermediate I) to form undecaprenyl-pyrophosphoryl-MurNAc-(pentapeptide)GlcNAc (lipid intermediate II). This is UDP-N-acetylglucosamine--N-acetylmuramyl-(pentapeptide) pyrophosphoryl-undecaprenol N-acetylglucosamine transferase from Burkholderia pseudomallei (strain 668).